Consider the following 2365-residue polypeptide: TRIO and F-actin-binding protein (2365 aa).

4 disordered regions span residues valine 48–leucine 1106, histidine 1168–arginine 1554, leucine 1593–isoleucine 1667, and alanine 1679–arginine 1751. Over residues serine 132–serine 151 the composition is skewed to low complexity. Histidine 221 is modified (phosphothreonine). Polar residues-rich tracts occupy residues threonine 239–serine 271, arginine 291–arginine 375, arginine 403–arginine 422, arginine 429–arginine 471, arginine 478–arginine 520, arginine 527–arginine 569, arginine 576–arginine 618, arginine 625–threonine 650, serine 661–threonine 674, arginine 683–alanine 701, serine 709–threonine 722, arginine 745–arginine 785, and isoleucine 807–serine 837. Residues serine 324–serine 348 form an essentiel for its aggregation region. Glutamine 457 carries the post-translational modification Phosphothreonine. The segment covering threonine 839 to threonine 854 has biased composition (basic and acidic residues). Polar residues-rich tracts occupy residues glutamine 855–histidine 898, proline 913–serine 927, and aspartate 945–proline 994. The segment covering arginine 1045–proline 1056 has biased composition (basic and acidic residues). Residues serine 1195 to leucine 1206 are compositionally biased toward polar residues. 2 stretches are compositionally biased toward basic and acidic residues: residues glutamate 1260–tyrosine 1270 and glycine 1303–glutamate 1319. Low complexity predominate over residues serine 1332–proline 1349. 2 stretches are compositionally biased toward basic and acidic residues: residues serine 1378 to arginine 1387 and threonine 1402 to arginine 1411. A compositionally biased stretch (gly residues) spans glycine 1452–glycine 1461. Residues tryptophan 1494 to lysine 1508 show a composition bias toward basic and acidic residues. A compositionally biased stretch (polar residues) spans glutamate 1524–proline 1534. Residues proline 1594 to alanine 1606 show a composition bias toward basic and acidic residues. Over residues alanine 1645–tryptophan 1664 the composition is skewed to polar residues. A compositionally biased stretch (low complexity) spans proline 1696–proline 1705. Basic and acidic residues predominate over residues lysine 1724 to glutamate 1735. The PH domain occupies leucine 1778 to arginine 1887. Phosphoserine is present on serine 1796. Disordered stretches follow at residues threonine 1889–aspartate 2017 and leucine 2174–aspartate 2194. Arginine 1930 is subject to Omega-N-methylarginine. Residues serine 1949 and serine 1955 each carry the phosphoserine modification. Basic and acidic residues predominate over residues threonine 1965–threonine 1997. 2 coiled-coil regions span residues serine 2062–leucine 2247 and glutamate 2281–asparagine 2361.

In terms of assembly, isoform 1 forms aggregates. Isoform 1 binds to TRIO and F-actin. Isoform 1 may also interact with myosin II. Interacts with HECTD3. Interacts with PJVK. Interacts with TERF1; mediates TERF1 localization to the centrosome. Post-translationally, ubiquitinated by HECTD3, leading to its degradation by the proteasome. In terms of processing, phosphorylation at Thr-457 by PLK1 ensures mitotic progression and is essential for accurate chromosome segregation. Phosphorylation at residues Thr-221 and Thr-457 by kinase NEK2A and PLK1 coordinates TERF1 translocation from telomere to spindle pole. In terms of tissue distribution, widely expressed. Highly expressed in heart and placenta. As to expression, expressed in fetal brain, retina and cochlea but is not detectable in the other tissues.

The protein localises to the nucleus. Its subcellular location is the cytoplasm. It is found in the cytoskeleton. The protein resides in the microtubule organizing center. It localises to the centrosome. The protein localises to the midbody. Its subcellular location is the chromosome. It is found in the telomere. In terms of biological role, regulates actin cytoskeletal organization, cell spreading and cell contraction by directly binding and stabilizing filamentous F-actin and prevents its depolymerization. May also serve as a linker protein to recruit proteins required for F-actin formation and turnover. Essential for correct mitotic progression. Functionally, plays a pivotal role in the formation of stereocilia rootlets. The protein is TRIO and F-actin-binding protein (TRIOBP) of Homo sapiens (Human).